We begin with the raw amino-acid sequence, 193 residues long: Hypoxanthine/guanine phosphoribosyltransferase (193 aa).

This sequence belongs to the purine/pyrimidine phosphoribosyltransferase family. Archaeal HPRT subfamily. As to quaternary structure, homodimer.

Its subcellular location is the cytoplasm. It carries out the reaction IMP + diphosphate = hypoxanthine + 5-phospho-alpha-D-ribose 1-diphosphate. The enzyme catalyses GMP + diphosphate = guanine + 5-phospho-alpha-D-ribose 1-diphosphate. The protein operates within purine metabolism; IMP biosynthesis via salvage pathway; IMP from hypoxanthine: step 1/1. In terms of biological role, catalyzes a salvage reaction resulting in the formation of IMP that is energically less costly than de novo synthesis. Prefers hypoxanthine, has 66% activity with guanine while activity with adenine, xanthine, uracil, orotate, or cytosine is negligible. The chain is Hypoxanthine/guanine phosphoribosyltransferase from Methanothermobacter marburgensis (strain ATCC BAA-927 / DSM 2133 / JCM 14651 / NBRC 100331 / OCM 82 / Marburg) (Methanobacterium thermoautotrophicum).